We begin with the raw amino-acid sequence, 1077 residues long: Carbamoyl phosphate synthase large chain (1077 aa).

The interval 1-403 (MPKRTDIQSI…SLHKALRGLE (403 aa)) is carboxyphosphate synthetic domain. Residues Arg129, Arg169, Gly175, Gly176, Glu208, Leu210, Glu215, Gly241, Ile242, His243, Gln285, and Glu299 each contribute to the ATP site. The ATP-grasp 1 domain occupies 133–328 (DKAMKSIGLE…IAKIAAKLAV (196 aa)). The Mg(2+) site is built by Gln285, Glu299, and Asn301. Mn(2+) contacts are provided by Gln285, Glu299, and Asn301. Residues 404 to 553 (VGATGFDEMV…YSSYDDECEA (150 aa)) form an oligomerization domain region. Residues 554–935 (NPTDKEKIMV…AYAKAELGCG (382 aa)) form a carbamoyl phosphate synthetic domain region. One can recognise an ATP-grasp 2 domain in the interval 678 to 869 (QQAVDRLGLL…LAKIAARVMA (192 aa)). Arg714, Arg753, Leu755, Glu760, Gly785, Val786, His787, Ser788, Gln828, and Glu840 together coordinate ATP. Mg(2+) contacts are provided by Gln828, Glu840, and Asn842. Residues Gln828, Glu840, and Asn842 each coordinate Mn(2+). Residues 936–1077 (NVYPEGGRAL…HAQVQASLKA (142 aa)) form the MGS-like domain. Residues 936–1077 (NVYPEGGRAL…HAQVQASLKA (142 aa)) are allosteric domain.

It belongs to the CarB family. Composed of two chains; the small (or glutamine) chain promotes the hydrolysis of glutamine to ammonia, which is used by the large (or ammonia) chain to synthesize carbamoyl phosphate. Tetramer of heterodimers (alpha,beta)4. It depends on Mg(2+) as a cofactor. The cofactor is Mn(2+).

It catalyses the reaction hydrogencarbonate + L-glutamine + 2 ATP + H2O = carbamoyl phosphate + L-glutamate + 2 ADP + phosphate + 2 H(+). The catalysed reaction is hydrogencarbonate + NH4(+) + 2 ATP = carbamoyl phosphate + 2 ADP + phosphate + 2 H(+). It functions in the pathway amino-acid biosynthesis; L-arginine biosynthesis; carbamoyl phosphate from bicarbonate: step 1/1. Its pathway is pyrimidine metabolism; UMP biosynthesis via de novo pathway; (S)-dihydroorotate from bicarbonate: step 1/3. In terms of biological role, large subunit of the glutamine-dependent carbamoyl phosphate synthetase (CPSase). CPSase catalyzes the formation of carbamoyl phosphate from the ammonia moiety of glutamine, carbonate, and phosphate donated by ATP, constituting the first step of 2 biosynthetic pathways, one leading to arginine and/or urea and the other to pyrimidine nucleotides. The large subunit (synthetase) binds the substrates ammonia (free or transferred from glutamine from the small subunit), hydrogencarbonate and ATP and carries out an ATP-coupled ligase reaction, activating hydrogencarbonate by forming carboxy phosphate which reacts with ammonia to form carbamoyl phosphate. The polypeptide is Carbamoyl phosphate synthase large chain (Vibrio vulnificus (strain CMCP6)).